The sequence spans 534 residues: Phosphoenolpyruvate carboxykinase (ATP) (534 aa).

Substrate-binding residues include Arg-59, Tyr-200, and Lys-206. Residues Lys-206, His-225, and 242 to 250 contribute to the ATP site; that span reads GLSGTGKTT. 2 residues coordinate Mn(2+): Lys-206 and His-225. Asp-263 contacts Mn(2+). ATP contacts are provided by residues Glu-291, Arg-327, 443-444, and Thr-449; that span reads RI. Arg-327 contributes to the substrate binding site.

Belongs to the phosphoenolpyruvate carboxykinase (ATP) family. Requires Mn(2+) as cofactor.

Its subcellular location is the cytoplasm. The catalysed reaction is oxaloacetate + ATP = phosphoenolpyruvate + ADP + CO2. The protein operates within carbohydrate biosynthesis; gluconeogenesis. In terms of biological role, involved in the gluconeogenesis. Catalyzes the conversion of oxaloacetate (OAA) to phosphoenolpyruvate (PEP) through direct phosphoryl transfer between the nucleoside triphosphate and OAA. This is Phosphoenolpyruvate carboxykinase (ATP) from Agathobacter rectalis (strain ATCC 33656 / DSM 3377 / JCM 17463 / KCTC 5835 / VPI 0990) (Eubacterium rectale).